The chain runs to 1730 residues: Myosin-7 (1730 aa).

Residues 8–56 (TVGSHVWVEDPDDAWIDGEVEEVNSEEITVNCSGKTVVAKLNNVYPKDP) enclose the Myosin N-terminal SH3-like domain. In terms of domain architecture, Myosin motor spans 61–731 (LGVDDMTKLA…QMAEMDAHRA (671 aa)). ATP contacts are provided by residues 155 to 162 (GESGAGKT) and 208 to 216 (NNNSSRFGK). Actin-binding stretches follow at residues 494–528 (LIEKKPGGIIALLDEACMFPRSTHDTFAQKLYQTF), 530–553 (NHKRFGKPKLAQTDFTICHYAGDV), 588–612 (FPPLPEESSKTSKFSSIGSQFKQQL), and 612–634 (LQSLLESLSTTEPHYIRCVKPNN). 4 IQ domains span residues 757–786 (LQAASTEIQALCRGQVARVWFETMRREAAS), 782–811 (REAASLRIQKQARTYICQNAYKTLCSSACS), 831–850 (RRATIIIQSQIRRCLCHQRY), and 853–882 (TKKAAITTQCGWRVKVARRELRNLKMAAKE). Positions 883–1224 (TGALQDAKTK…VSDMETAEQI (342 aa)) form a coiled coil. Residues 1327-1678 (DRIVPVFGSA…ISNLKLLLTN (352 aa)) form the Dilute domain. 2 disordered regions span residues 1367–1387 (QSSTGSSPTKPPQPTSFFGRM) and 1456–1520 (DSSV…SSEE). Low complexity predominate over residues 1456-1465 (DSSVVNSPSK). Residues 1475–1508 (SSEENSPKKSSEENSPKESSGDKSPQKLSDDNSP) are compositionally biased toward basic and acidic residues.

It belongs to the TRAFAC class myosin-kinesin ATPase superfamily. Myosin family. Plant myosin class XI subfamily. In terms of assembly, homodimer.

Functionally, myosin heavy chain that is required for the cell cycle-regulated transport of various organelles and proteins for their segregation. Functions by binding with its tail domain to receptor proteins on organelles and exerting force with its N-terminal motor domain against actin filaments, thereby transporting its cargo along polarized actin cables. This Arabidopsis thaliana (Mouse-ear cress) protein is Myosin-7 (XI-A).